The sequence spans 510 residues: Guanosine import ATP-binding protein NupO (510 aa).

ABC transporter domains are found at residues isoleucine 5 to glutamate 240 and leucine 257 to threonine 501. Glycine 37–serine 44 contributes to the ATP binding site.

The protein belongs to the ABC transporter superfamily. The complex is composed of two ATP-binding proteins (NupO), two transmembrane proteins (NupP and NupQ) and a solute-binding protein (NupN).

Its subcellular location is the cell membrane. Functionally, part of an ABC transporter complex involved in the uptake of guanosine. Responsible for energy coupling to the transport system. May be a nucleoside transporter of broad specificity but with various affinities for different substrates. The protein is Guanosine import ATP-binding protein NupO of Bacillus subtilis (strain 168).